Consider the following 374-residue polypeptide: Probable tuliposide A-converting enzyme b6, amyloplastic (374 aa).

The N-terminal 68 residues, 1 to 68 (MSVALFCGPP…TNSSLSPSPT (68 aa)), are a transit peptide targeting the amyloplast. The active-site Acyl-ester intermediate is the Ser-226. Residues Asp-316 and His-348 each act as charge relay system in the active site.

This sequence belongs to the AB hydrolase superfamily. Homodimer.

The protein resides in the plastid. The protein localises to the amyloplast. It catalyses the reaction 6-tuliposide A = tulipalin A + D-glucose. In terms of biological role, lactone-forming carboxylesterases, specifically catalyzing intramolecular transesterification, but not hydrolysis. Involved in the biosynthesis of tulipalins, defensive chemicals that show antimicrobial activities against a broad range of strains of bacteria and fungi. Substrates are 6-tuliposide A &gt; 6-tuliposide B. This Tulipa gesneriana (Garden tulip) protein is Probable tuliposide A-converting enzyme b6, amyloplastic (TCEA-B6).